Here is a 147-residue protein sequence, read N- to C-terminus: Large ribosomal subunit protein uL13 (147 aa).

The protein belongs to the universal ribosomal protein uL13 family. As to quaternary structure, part of the 50S ribosomal subunit.

This protein is one of the early assembly proteins of the 50S ribosomal subunit, although it is not seen to bind rRNA by itself. It is important during the early stages of 50S assembly. This chain is Large ribosomal subunit protein uL13, found in Kocuria rhizophila (strain ATCC 9341 / DSM 348 / NBRC 103217 / DC2201).